The sequence spans 347 residues: Ribosomal RNA small subunit methyltransferase H (347 aa).

S-adenosyl-L-methionine-binding positions include 47-49 (GGY), Asp64, Phe91, Asp114, and Gln121. The segment at 291–347 (PAVKGAVGPTAEEEERNPRARSAKLRAGIRTENPPLEDDLSLFGLPKLPETNELARS) is disordered.

This sequence belongs to the methyltransferase superfamily. RsmH family.

The protein localises to the cytoplasm. The enzyme catalyses cytidine(1402) in 16S rRNA + S-adenosyl-L-methionine = N(4)-methylcytidine(1402) in 16S rRNA + S-adenosyl-L-homocysteine + H(+). In terms of biological role, specifically methylates the N4 position of cytidine in position 1402 (C1402) of 16S rRNA. The polypeptide is Ribosomal RNA small subunit methyltransferase H (Brucella anthropi (strain ATCC 49188 / DSM 6882 / CCUG 24695 / JCM 21032 / LMG 3331 / NBRC 15819 / NCTC 12168 / Alc 37) (Ochrobactrum anthropi)).